The chain runs to 402 residues: Proline-rich protein 25 (402 aa).

Disordered regions lie at residues 1–29 (MARTDQKPPCRGGCWGQPGHPNTGGAAAH), 109–255 (TVPG…MVGS), and 337–371 (EAAQDPATRRTAPPRRTASPEPPAPGAPLPACPGR). A compositionally biased stretch (low complexity) spans 345–355 (RRTAPPRRTAS). Over residues 356 to 367 (PEPPAPGAPLPA) the composition is skewed to pro residues.

The protein is Proline-rich protein 25 (PRR25) of Homo sapiens (Human).